Reading from the N-terminus, the 209-residue chain is Translation initiation factor IF-3 (209 aa).

It belongs to the IF-3 family. Monomer.

The protein localises to the cytoplasm. Its function is as follows. IF-3 binds to the 30S ribosomal subunit and shifts the equilibrium between 70S ribosomes and their 50S and 30S subunits in favor of the free subunits, thus enhancing the availability of 30S subunits on which protein synthesis initiation begins. This chain is Translation initiation factor IF-3, found in Chlorobium phaeobacteroides (strain DSM 266 / SMG 266 / 2430).